Here is a 20-residue protein sequence, read N- to C-terminus: Cytochrome c oxidase subunit 6A2, mitochondrial (20 aa).

The disordered stretch occupies residues 1 to 20 (ASGAKGDHGGAGASTXXLLT).

Belongs to the cytochrome c oxidase subunit 6A family. Component of the cytochrome c oxidase (complex IV, CIV), a multisubunit enzyme composed of 14 subunits. The complex is composed of a catalytic core of 3 subunits MT-CO1, MT-CO2 and MT-CO3, encoded in the mitochondrial DNA, and 11 supernumerary subunits COX4I, COX5A, COX5B, COX6A, COX6B, COX6C, COX7A, COX7B, COX7C, COX8 and NDUFA4, which are encoded in the nuclear genome. The complex exists as a monomer or a dimer and forms supercomplexes (SCs) in the inner mitochondrial membrane with NADH-ubiquinone oxidoreductase (complex I, CI) and ubiquinol-cytochrome c oxidoreductase (cytochrome b-c1 complex, complex III, CIII), resulting in different assemblies (supercomplex SCI(1)III(2)IV(1) and megacomplex MCI(2)III(2)IV(2)). In terms of tissue distribution, heart specific isoform.

The protein localises to the mitochondrion inner membrane. It participates in energy metabolism; oxidative phosphorylation. Its function is as follows. Component of the cytochrome c oxidase, the last enzyme in the mitochondrial electron transport chain which drives oxidative phosphorylation. The respiratory chain contains 3 multisubunit complexes succinate dehydrogenase (complex II, CII), ubiquinol-cytochrome c oxidoreductase (cytochrome b-c1 complex, complex III, CIII) and cytochrome c oxidase (complex IV, CIV), that cooperate to transfer electrons derived from NADH and succinate to molecular oxygen, creating an electrochemical gradient over the inner membrane that drives transmembrane transport and the ATP synthase. Cytochrome c oxidase is the component of the respiratory chain that catalyzes the reduction of oxygen to water. Electrons originating from reduced cytochrome c in the intermembrane space (IMS) are transferred via the dinuclear copper A center (CU(A)) of subunit 2 and heme A of subunit 1 to the active site in subunit 1, a binuclear center (BNC) formed by heme A3 and copper B (CU(B)). The BNC reduces molecular oxygen to 2 water molecules unsing 4 electrons from cytochrome c in the IMS and 4 protons from the mitochondrial matrix. Plays a role in the assembly and stabilization of complex IV. The protein is Cytochrome c oxidase subunit 6A2, mitochondrial (COX6A2) of Canis lupus familiaris (Dog).